The chain runs to 131 residues: Runt-related transcription factor 2 (131 aa).

The 10-residue stretch at 1–10 (MRVGVPPQIP) folds into the Runt domain. The interval 1-75 (MRVGVPPQIP…SSTRGTGLPV (75 aa)) is disordered. Arg11 carries the asymmetric dimethylarginine modification. Polar residues-rich tracts occupy residues 13-36 (SLNS…RQAQ) and 43-70 (YDQS…STRG).

In terms of assembly, heterodimer of an alpha and a beta subunit. The alpha subunit binds DNA as a monomer and through the Runt domain. DNA-binding is increased by heterodimerization. Interacts with XRCC6 (Ku70) and XRCC5 (Ku80). Interacts with CCNB1, KAT6A and KAT6B. Interacts with HIVEP3. Interacts with IFI204. Interaction with SATB2; the interaction results in enhanced DNA binding and transactivation by these transcription factors. Binds to HIPK3. Interacts with FOXO1 (via a C-terminal region); the interaction inhibits RUNX2 transcriptional activity towards BGLAP. This interaction is prevented on insulin or IGF1 stimulation as FOXO1 is exported from the nucleus. Interacts with FOXP3. Interacts with TMEM119. Interacts with OLFM2. Interacts with IPO7; the interaction inhibits RUNX2 nuclear translocation in osteoblasts. Post-translationally, phosphorylated; probably by MAP kinases (MAPK). Phosphorylation by HIPK3 is required for the SPEN/MINT and FGF2 transactivation during osteoblastic differentiation.

It localises to the nucleus. It is found in the cytoplasm. In terms of biological role, transcription factor involved in osteoblastic differentiation and skeletal morphogenesis. Essential for the maturation of osteoblasts and both intramembranous and endochondral ossification. CBF binds to the core site, 5'-PYGPYGGT-3', of a number of enhancers and promoters, including murine leukemia virus, polyomavirus enhancer, T-cell receptor enhancers, osteocalcin, osteopontin, bone sialoprotein, alpha 1(I) collagen, LCK, IL-3 and GM-CSF promoters. Inhibits KAT6B-dependent transcriptional activation. In osteoblasts, supports transcription activation: synergizes with SPEN/MINT to enhance FGFR2-mediated activation of the osteocalcin FGF-responsive element (OCFRE). The protein is Runt-related transcription factor 2 (RUNX2) of Equus caballus (Horse).